A 156-amino-acid polypeptide reads, in one-letter code: Transcriptional regulator MraZ (156 aa).

2 consecutive SpoVT-AbrB domains span residues 7–64 (KERH…EPSV) and 93–136 (LEMV…EPAR).

It belongs to the MraZ family. Forms oligomers.

The protein localises to the cytoplasm. It localises to the nucleoid. In Chlorobium phaeovibrioides (strain DSM 265 / 1930) (Prosthecochloris vibrioformis (strain DSM 265)), this protein is Transcriptional regulator MraZ.